The chain runs to 456 residues: TGACG-sequence-specific DNA-binding protein TGA-2.1 (456 aa).

2 disordered regions span residues 1-41 and 115-170; these read MASK…NTSR and SASG…QKTL. 2 stretches are compositionally biased toward polar residues: residues 9-41 and 125-141; these read GNRS…NTSR and GESN…TSTD. The segment covering 158-169 has biased composition (basic and acidic residues); the sequence is DKSKEKVLDQKT. The region spanning 166–229 is the bZIP domain; sequence DQKTLRRLAQ…NIADQSNGVG (64 aa). Residues 167–220 are a coiled coil; it reads QKTLRRLAQNREAARKSRLRKKAYVQQLENSRLKLSQLEQDLQRARQQGKYISN. Residues 168-188 form a basic motif region; sequence KTLRRLAQNREAARKSRLRKK. The tract at residues 194 to 208 is leucine-zipper; it reads LENSRLKLSQLEQDL. A DOG1 domain is found at 233-450; that stretch reads PLAFDAEYSR…RALSSLWLAR (218 aa).

This sequence belongs to the bZIP family. In terms of assembly, can form heterodimer with TGA2.2.

Its subcellular location is the nucleus. In terms of biological role, transcriptional activator that binds specifically to the DNA sequence 5'-TGACG-3'. Recognizes ocs elements like the as-1 motif of the cauliflower mosaic virus 35S promoter. Binding to the as-1-like cis elements mediate auxin- and salicylic acid-inducible transcription. The chain is TGACG-sequence-specific DNA-binding protein TGA-2.1 (TGA21) from Nicotiana tabacum (Common tobacco).